Consider the following 264-residue polypeptide: Putative HTH-type transcriptional regulator TrmBL2 (264 aa).

The H-T-H motif DNA-binding region spans Leu33–Arg54.

Belongs to the transcriptional regulator TrmB family.

Functionally, binds to the maltodextrin transport gene cluster (mdxE operon) promoter and to some other TGM (Thermococcales-Glycolytic-Motif) sequences, but not exclusively. This chain is Putative HTH-type transcriptional regulator TrmBL2 (trmBL2), found in Pyrococcus furiosus (strain ATCC 43587 / DSM 3638 / JCM 8422 / Vc1).